The primary structure comprises 204 residues: Somatotropin (204 aa).

The signal sequence occupies residues 1 to 17 (MDRVILLLSVVSLGVSS). Q18 is modified (pyrrolidone carboxylic acid). H36 contacts Zn(2+). A disulfide bridge links C69 with C177. A Zn(2+)-binding site is contributed by E186. A disulfide bridge connects residues C194 and C202.

This sequence belongs to the somatotropin/prolactin family.

The protein resides in the secreted. In terms of biological role, growth hormone plays an important role in growth control and is involved in the regulation of several anabolic processes. Implicated as an osmoregulatory substance important for seawater adaptation. The chain is Somatotropin (gh) from Sebastes schlegelii (Korean rockfish).